The following is a 336-amino-acid chain: MKEPPSLLWGLDPVFLSHARLYIKDILELKESNQVPGIFFYKDHPIKQVDILGTVVCVREKDAFYSYGDVHRSTSGANDLDGLVQELHRQESSKAKMEIGDVIRVRGYIKVFRMQREVVASIFYKVDDPTLDMQIMRMLELPYLYKHAYDKPFILPEDMTNQSQEQPNQAVLQRSGLISLLSEKIMNFVKENTIYNFYLPELESMPSLLSEATNPHYITESDSNVSSSSREIRSLFKEAIHILLKRGIVYQKGQNKDVYYVTDHDKELHKLTLNMIKQDCSRQGHAEKGCHFLHILNCVQQDFGSCINEAILQRVINALEQNSDIVSTMEKYYTAF.

Positions 49–126 (VDILGTVVCV…EVVASIFYKV (78 aa)) form a DNA-binding region, OB. Winged helix-turn-helix (wHTH) stretches follow at residues 162–263 (QSQE…YVTD) and 264–336 (HDKE…YTAF).

This sequence belongs to the CTC1 family. Component of the CST complex.

Its subcellular location is the nucleus. The protein resides in the chromosome. It localises to the telomere. Functionally, component of the CST complex proposed to act as a specialized replication factor promoting DNA replication under conditions of replication stress or natural replication barriers such as the telomere duplex. The CST complex binds single-stranded DNA with high affinity in a sequence-independent manner, while isolated subunits bind DNA with low affinity by themselves. Initially the CST complex has been proposed to protect telomeres from DNA degradation. However, the CST complex has been shown to be involved in several aspects of telomere replication. The chain is CST complex subunit STN1 from Aquarana catesbeiana (American bullfrog).